Here is a 217-residue protein sequence, read N- to C-terminus: HTH-type transcriptional regulator EthR (217 aa).

A disordered region spans residues 1–22; that stretch reads MTTASQTRTPRGRRSARPSGDD. Residues 21–81 form the HTH tetR-type domain; the sequence is DDREAAILAT…SLIDPLIKRA (61 aa). Residues 44 to 63 constitute a DNA-binding region (H-T-H motif); that stretch reads SVDDLAKGAGISRPTFYFYF.

In terms of assembly, homodimer.

Functionally, involved in the repression of teh monooxygenase EthA which is responsible of the formation of the active metabolite of ethionamide (ETH). This Mycolicibacterium smegmatis (strain ATCC 700084 / mc(2)155) (Mycobacterium smegmatis) protein is HTH-type transcriptional regulator EthR (ethR).